The primary structure comprises 73 residues: uncharacterized protein (73 aa).

The next 2 membrane-spanning stretches (helical) occupy residues 10–30 (ILLA…YVSA) and 42–62 (YSTV…IYLI).

It localises to the cell membrane. This is an uncharacterized protein from Archaeoglobus fulgidus (strain ATCC 49558 / DSM 4304 / JCM 9628 / NBRC 100126 / VC-16).